We begin with the raw amino-acid sequence, 106 residues long: Apovitellenin-1 (106 aa).

The first 24 residues, 1 to 24 (MVQYRALVIAVILLLSTTVPEVHS), serve as a signal peptide directing secretion.

The protein belongs to the apovitellenin family. In terms of assembly, homodimer; disulfide-linked. As to expression, produced by the liver, secreted into the blood and then sequestred by receptor mediated endocytosis into growing oocytes.

Protein component of the very low density lipoprotein (VLDL) of egg-laying females. Potent lipoprotein lipase inhibitor, preventing the loss of triglycerides from VLDL on their way from the liver to the growing oocytes. In Gallus gallus (Chicken), this protein is Apovitellenin-1.